The primary structure comprises 310 residues: MSRPSAPRGRTELRSIHERGHERGSAGVGRTALATAWIRAGESERPDRLFDDWLAPAFVAAAGDALPLIPPDAGGRLGALAEMMNAYLAVRTRFFDDELLAAAEAGVRQVVLLAAGLDSRAFRLPWPAGTRLFEVDRPDILAFKEQVLAAGETGPRCERHAVSADLTEDWADEILDAGFRPAEPTAWLAEGIIVYLSAEEAERLLTDVTRLSAPGSRLALEDAKGLAEEMVEEARNIPPLGEFADLWKGGLEGASPAWLGDHGWRGREIDSTTVATELRRPIPAEMPVAGYFVTAQRAVGERAEGERAEG.

Residues 1 to 28 (MSRPSAPRGRTELRSIHERGHERGSAGV) form a disordered region. Over residues 9–24 (GRTELRSIHERGHERG) the composition is skewed to basic and acidic residues. Residues D136 and 165-166 (DL) contribute to the S-adenosyl-L-methionine site.

The protein belongs to the UPF0677 family.

Its function is as follows. Exhibits S-adenosyl-L-methionine-dependent methyltransferase activity. In Parafrankia sp. (strain EAN1pec), this protein is Putative S-adenosyl-L-methionine-dependent methyltransferase Franean1_4929.